Consider the following 202-residue polypeptide: B-cell CLL/lymphoma 7 protein family member B (202 aa).

A disordered region spans residues 53-202; the sequence is DSKEKEKSKS…PTVPQTASES (150 aa). A compositionally biased stretch (polar residues) spans 90 to 99; sequence ENSNQSSVSD. Positions 107–123 are enriched in low complexity; that stretch reads SSTNSSPSPQQSESLSP. Residues serine 114, serine 118, serine 120, serine 122, serine 127, serine 148, and serine 152 each carry the phosphoserine modification.

Belongs to the BCL7 family. Ubiquitous.

Its function is as follows. Positive regulator of apoptosis. Plays a role in the Wnt signaling pathway, negatively regulating the expression of Wnt signaling components CTNNB1 and HMGA1. Involved in cell cycle progression, maintenance of the nuclear structure and stem cell differentiation. May play a role in lung tumor development or progression. This chain is B-cell CLL/lymphoma 7 protein family member B (BCL7B), found in Homo sapiens (Human).